Consider the following 779-residue polypeptide: Phosphoribosylformylglycinamidine synthase subunit PurL (779 aa).

Histidine 52 is a catalytic residue. Residues tyrosine 55 and lysine 94 each contribute to the ATP site. Glutamate 96 provides a ligand contact to Mg(2+). Residues 97 to 100 and arginine 119 each bind substrate; that span reads SHNH. The active-site Proton acceptor is the histidine 98. A Mg(2+)-binding site is contributed by aspartate 120. Glutamine 243 serves as a coordination point for substrate. Position 271 (aspartate 271) interacts with Mg(2+). 315–317 lines the substrate pocket; it reads ESQ. Residues asparagine 523 and glycine 560 each coordinate ATP. Asparagine 561 is a Mg(2+) binding site. A substrate-binding site is contributed by serine 563.

It belongs to the FGAMS family. Monomer. Part of the FGAM synthase complex composed of 1 PurL, 1 PurQ and 2 PurS subunits.

It is found in the cytoplasm. It catalyses the reaction N(2)-formyl-N(1)-(5-phospho-beta-D-ribosyl)glycinamide + L-glutamine + ATP + H2O = 2-formamido-N(1)-(5-O-phospho-beta-D-ribosyl)acetamidine + L-glutamate + ADP + phosphate + H(+). Its pathway is purine metabolism; IMP biosynthesis via de novo pathway; 5-amino-1-(5-phospho-D-ribosyl)imidazole from N(2)-formyl-N(1)-(5-phospho-D-ribosyl)glycinamide: step 1/2. Part of the phosphoribosylformylglycinamidine synthase complex involved in the purines biosynthetic pathway. Catalyzes the ATP-dependent conversion of formylglycinamide ribonucleotide (FGAR) and glutamine to yield formylglycinamidine ribonucleotide (FGAM) and glutamate. The FGAM synthase complex is composed of three subunits. PurQ produces an ammonia molecule by converting glutamine to glutamate. PurL transfers the ammonia molecule to FGAR to form FGAM in an ATP-dependent manner. PurS interacts with PurQ and PurL and is thought to assist in the transfer of the ammonia molecule from PurQ to PurL. The polypeptide is Phosphoribosylformylglycinamidine synthase subunit PurL (Prochlorococcus marinus (strain AS9601)).